We begin with the raw amino-acid sequence, 275 residues long: Urease accessory protein UreD (275 aa).

The protein belongs to the UreD family. In terms of assembly, ureD, UreF and UreG form a complex that acts as a GTP-hydrolysis-dependent molecular chaperone, activating the urease apoprotein by helping to assemble the nickel containing metallocenter of UreC. The UreE protein probably delivers the nickel.

Its subcellular location is the cytoplasm. Required for maturation of urease via the functional incorporation of the urease nickel metallocenter. This is Urease accessory protein UreD from Cereibacter sphaeroides (strain ATCC 17023 / DSM 158 / JCM 6121 / CCUG 31486 / LMG 2827 / NBRC 12203 / NCIMB 8253 / ATH 2.4.1.) (Rhodobacter sphaeroides).